The sequence spans 405 residues: Serpin H1 (405 aa).

The N-terminal stretch at 1–15 is a signal peptide; it reads MQIFLVLALCGLAAA. N-linked (GlcNAc...) asparagine glycosylation is found at Asn107 and Asn112. A Prevents secretion from ER motif is present at residues 402 to 405; that stretch reads RDEL.

The protein belongs to the serpin family.

The protein resides in the endoplasmic reticulum lumen. In terms of biological role, binds specifically to collagen. Could be involved as a chaperone in the biosynthetic pathway of collagen. The polypeptide is Serpin H1 (SERPINH1) (Gallus gallus (Chicken)).